The sequence spans 95 residues: MAKYEILYIIRPNIEEEAKNALVARFDSILSDNGATVVESKDWEKRRLAYEIQDFTEGLYHIVNVEAEDAVALNEFDRLSKINGDILRHMIVKVD.

It belongs to the bacterial ribosomal protein bS6 family.

Its function is as follows. Binds together with bS18 to 16S ribosomal RNA. This chain is Small ribosomal subunit protein bS6, found in Streptococcus agalactiae serotype Ia (strain ATCC 27591 / A909 / CDC SS700).